A 337-amino-acid polypeptide reads, in one-letter code: Holliday junction branch migration complex subunit RuvB (337 aa).

A disordered region spans residues 1–20 (MQTRFVSPVNHDEEQDEPSV). Positions 1 to 181 (MQTRFVSPVN…FGIILRLDLY (181 aa)) are large ATPase domain (RuvB-L). ATP-binding positions include Arg21, Gly62, Lys65, Thr66, Thr67, 128-130 (EDY), Arg171, Tyr181, and Arg218. Mg(2+) is bound at residue Thr66. The interval 182-252 (DPSELTVIVT…IANTALFALG (71 aa)) is small ATPAse domain (RuvB-S). Positions 255-337 (QKGLDILDRR…SHTRDLTSFL (83 aa)) are head domain (RuvB-H). 2 residues coordinate DNA: Arg310 and Arg315.

Belongs to the RuvB family. In terms of assembly, homohexamer. Forms an RuvA(8)-RuvB(12)-Holliday junction (HJ) complex. HJ DNA is sandwiched between 2 RuvA tetramers; dsDNA enters through RuvA and exits via RuvB. An RuvB hexamer assembles on each DNA strand where it exits the tetramer. Each RuvB hexamer is contacted by two RuvA subunits (via domain III) on 2 adjacent RuvB subunits; this complex drives branch migration. In the full resolvosome a probable DNA-RuvA(4)-RuvB(12)-RuvC(2) complex forms which resolves the HJ.

It is found in the cytoplasm. It catalyses the reaction ATP + H2O = ADP + phosphate + H(+). In terms of biological role, the RuvA-RuvB-RuvC complex processes Holliday junction (HJ) DNA during genetic recombination and DNA repair, while the RuvA-RuvB complex plays an important role in the rescue of blocked DNA replication forks via replication fork reversal (RFR). RuvA specifically binds to HJ cruciform DNA, conferring on it an open structure. The RuvB hexamer acts as an ATP-dependent pump, pulling dsDNA into and through the RuvAB complex. RuvB forms 2 homohexamers on either side of HJ DNA bound by 1 or 2 RuvA tetramers; 4 subunits per hexamer contact DNA at a time. Coordinated motions by a converter formed by DNA-disengaged RuvB subunits stimulates ATP hydrolysis and nucleotide exchange. Immobilization of the converter enables RuvB to convert the ATP-contained energy into a lever motion, pulling 2 nucleotides of DNA out of the RuvA tetramer per ATP hydrolyzed, thus driving DNA branch migration. The RuvB motors rotate together with the DNA substrate, which together with the progressing nucleotide cycle form the mechanistic basis for DNA recombination by continuous HJ branch migration. Branch migration allows RuvC to scan DNA until it finds its consensus sequence, where it cleaves and resolves cruciform DNA. The chain is Holliday junction branch migration complex subunit RuvB from Methanospirillum hungatei JF-1 (strain ATCC 27890 / DSM 864 / NBRC 100397 / JF-1).